A 701-amino-acid polypeptide reads, in one-letter code: MNPVIKKFQFGQSTVTLETGRIARQASGAVLVTVDDDVSVLVTVVGAKQADAGKGFFPLSVHYQEKTYAAGKIPGGFFKREGRPSEKETLTSRLIDRPIRPLFPEGFMNEVQVVCTVVSTSKKIDPDIAAMIGTSAALAISGIPFDGPVGAARVAFHESTGYLLNPTYEQLQASSLDMVVAGTSEAVLMVESEAKELTEDQMLGAVLFAHDEFQVVINAIKELAAEAAKPVWDWQPKPEATALLGAIRAEFGDAISQAYTITVKADRYARLGELKDQVVAKLAVEEGSPSASEVKAAFGEIEYRTVRENIVNGKPRIDGRDTRTVRPLNIEVGVLPKTHGSALFTRGETQALVVATLGTARDAQLLDTLEGEKKDPFMLHYNFPPFSVGECGRMGGAGRREIGHGRLARRSVQAMLPGADVFPYTIRVVSEITESNGSSSMASVCGASLALMDAGVPMKAPVAGIAMGLVKEGEKFAILTDILGDEDHLGDMDFKVAGTSKGVTALQMDIKIKGITEEIMEIALGQALEARLNILGQMNQIIGQSRNELSANAPTMIAMKIDTDKIRDVIGKGGATIRAICEETKASIDIEDDGSIKIFGESKEAAEAARQRVLGITAEAEIGKIYVGKVERIVDFGAFVNILPGKDGLVHISMLSDARVEKVTDILKEGQEVEVLVLDVDNRGRIKLSIKDVAAAKASGV.

Mg(2+) is bound by residues D487 and D493. A KH domain is found at 554 to 613 (PTMIAMKIDTDKIRDVIGKGGATIRAICEETKASIDIEDDGSIKIFGESKEAAEAARQRV). Residues 623–691 (GKIYVGKVER…NRGRIKLSIK (69 aa)) enclose the S1 motif domain.

The protein belongs to the polyribonucleotide nucleotidyltransferase family. Component of the RNA degradosome, which is a multiprotein complex involved in RNA processing and mRNA degradation. Requires Mg(2+) as cofactor.

The protein resides in the cytoplasm. The catalysed reaction is RNA(n+1) + phosphate = RNA(n) + a ribonucleoside 5'-diphosphate. Functionally, involved in mRNA degradation. Catalyzes the phosphorolysis of single-stranded polyribonucleotides processively in the 3'- to 5'-direction. This Pseudomonas savastanoi pv. phaseolicola (strain 1448A / Race 6) (Pseudomonas syringae pv. phaseolicola (strain 1448A / Race 6)) protein is Polyribonucleotide nucleotidyltransferase.